The chain runs to 884 residues: Alanine--tRNA ligase (884 aa).

Zn(2+) contacts are provided by histidine 572, histidine 576, cysteine 673, and histidine 677.

The protein belongs to the class-II aminoacyl-tRNA synthetase family. Zn(2+) is required as a cofactor.

Its subcellular location is the cytoplasm. The catalysed reaction is tRNA(Ala) + L-alanine + ATP = L-alanyl-tRNA(Ala) + AMP + diphosphate. Its function is as follows. Catalyzes the attachment of alanine to tRNA(Ala) in a two-step reaction: alanine is first activated by ATP to form Ala-AMP and then transferred to the acceptor end of tRNA(Ala). Also edits incorrectly charged Ser-tRNA(Ala) and Gly-tRNA(Ala) via its editing domain. This chain is Alanine--tRNA ligase, found in Xylella fastidiosa (strain 9a5c).